We begin with the raw amino-acid sequence, 531 residues long: Peptide chain release factor 3 (531 aa).

The region spanning 13–282 (AKRRTFAIIS…TLIKYAPPPK (270 aa)) is the tr-type G domain. Residues 22–29 (SHPDAGKT), 90–94 (DTPGH), and 144–147 (NKLD) each bind GTP.

This sequence belongs to the TRAFAC class translation factor GTPase superfamily. Classic translation factor GTPase family. PrfC subfamily.

Its subcellular location is the cytoplasm. In terms of biological role, increases the formation of ribosomal termination complexes and stimulates activities of RF-1 and RF-2. It binds guanine nucleotides and has strong preference for UGA stop codons. It may interact directly with the ribosome. The stimulation of RF-1 and RF-2 is significantly reduced by GTP and GDP, but not by GMP. In Psychrobacter cryohalolentis (strain ATCC BAA-1226 / DSM 17306 / VKM B-2378 / K5), this protein is Peptide chain release factor 3.